Reading from the N-terminus, the 410-residue chain is Cathepsin D (410 aa).

A signal peptide spans 1–18; it reads MQPPSLLLLVLGLLAAPA. The propeptide at 19 to 64 is activation peptide; sequence AALVRIPLHKFTSVRRTMTELGGPVEDLIAKGPISKYAQGAPAVTG. Residues 79–405 enclose the Peptidase A1 domain; the sequence is YYGEIGIGTP…DRDQNRVGLA (327 aa). Disulfide bonds link C91-C160 and C110-C117. Residue D97 is part of the active site. N-linked (GlcNAc...) asparagine glycosylation is found at N134 and N261. The cysteines at positions 284 and 288 are disulfide-linked. D293 is an active-site residue. Residues C327 and C364 are joined by a disulfide bond.

It belongs to the peptidase A1 family. Consists of a light chain and a heavy chain. Interacts with ADAM30; this leads to activation of CTSD. Interacts with GRN; stabilizes CTSD; increases its proteolytic activity. Post-translationally, N- and O-glycosylated. Undergoes proteolytic cleavage and activation by ADAM30.

It is found in the lysosome. The protein resides in the melanosome. It localises to the secreted. The protein localises to the extracellular space. The catalysed reaction is Specificity similar to, but narrower than, that of pepsin A. Does not cleave the 4-Gln-|-His-5 bond in B chain of insulin.. Acid protease active in intracellular protein breakdown. Plays a role in APP processing following cleavage and activation by ADAM30 which leads to APP degradation. In Canis lupus familiaris (Dog), this protein is Cathepsin D (CTSD).